We begin with the raw amino-acid sequence, 866 residues long: MSLLKKLASLAPAHPSHGDVERREIAAPTLVGNAEYLKLVDVHWNSSQQIMGLDSKTVGPQERCKILMYHLNEIVSVLAEEKEECPGPCLKYVLDENIFEIVFMWGTSSYVNELMKREQIKVFRNLIERSKAPILIYEQVWKPLLCLLHSCASTKLPSDMEEDYVAVLKGLCVSANRDIVLLDLFFLENHNHSEISGFSVFSLLIPYVHREGDLGVWARDAMLLSMALSSIDARLGSYIVEETNFCPILAIGLSGLFSDLPTSLDIPSEDWYSLERGLWATFPELVAFLTSLEFCNNVIQIAHHKVQHMLLELIYHGFLVSVMSSALTQSSVEALTAVTAYLDLFVRSITDSKLMQVFVKFLLVEKSDGVPILDSLVARIGQESQLAVVSLGLIHTLLDLNCEDILYTLVLKYLIPCTHILSSQRRTVREVDYYSKSAAKFLSLIPSCCHGLSTCLASSRPESPSCLSSTESLNKSIEVKIDMKTSHDFVKYRPQPHVHGGEATLADYLEYLADARQAIRNCQLRCSCWSMQYDGTDLSSTDDATENNPANKRRSLVLANGSIPRSASEVSSTLAVKASDKTKRSLSSNDLCLPSAEEGLGPFLSTLFRKLENMAQNTFYVNLILTAVITRLCYYPQPLLKSFLLNYNIVLKPGVRSLFQILSSIKIKVENVVESVEGLHKLLRRARNNLILREEKSKASIQSVVADVPIPTRESIASPTTQKRLARQKTDTFLAVRIRDGPPPSLMRAHSIGSIGSASTSSSLSLTDSIESLGNLSPQFGSTADISEDASPVSQAPETTGRPRASAVVRESQTQLKRNTFRRKNPKAVKNAVYCIVMLEEWLKELAAISQEHALLPLVPQEMQDV.

Disordered stretches follow at residues 739–761 and 781–814; these read RDGPPPSLMRAHSIGSIGSASTS and GSTADISEDASPVSQAPETTGRPRASAVVRESQT. A compositionally biased stretch (low complexity) spans 751 to 761; sequence SIGSIGSASTS.

Belongs to the FHIP family.

This chain is FHIP family protein v1g243165, found in Nematostella vectensis (Starlet sea anemone).